Consider the following 147-residue polypeptide: MVNLSGDEKNAVHGLWSKVKVDEVGGEALGRLLVVYPWTRRFFESFGDLSTADAVMNNPKVKAHGSKVLNSFGDGLSHLDNLKGTYAKLSELHCDKLHVDPENFRLLGNVLVVVLARHFGKEFTPDLQAAYQKVVAGVANALAHRYH.

Val-2 carries the post-translational modification N-acetylvaline. Residues 3 to 147 (NLSGDEKNAV…VANALAHRYH (145 aa)) enclose the Globin domain. A Phosphoserine modification is found at Ser-45. The residue at position 60 (Lys-60) is an N6-acetyllysine. Heme b is bound at residue His-64. Residue Lys-83 is modified to N6-acetyllysine. His-93 serves as a coordination point for heme b. At Cys-94 the chain carries S-nitrosocysteine.

Belongs to the globin family. Heterotetramer of two alpha chains and two beta chains. In terms of tissue distribution, red blood cells.

In terms of biological role, involved in oxygen transport from the lung to the various peripheral tissues. The polypeptide is Hemoglobin subunit beta (HBB) (Vicugna pacos (Alpaca)).